The primary structure comprises 325 residues: Pseudouridylate synthase TRUB2, mitochondrial (325 aa).

Asp101 (nucleophile) is an active-site residue. Positions 292-325 (QTEGVSRGNPDREAAEGPIPGPSRGAEGEGELRA) are disordered.

The protein belongs to the pseudouridine synthase TruB family.

The protein localises to the mitochondrion matrix. The enzyme catalyses a uridine in mRNA = a pseudouridine in mRNA. It carries out the reaction uridine(55) in tRNA = pseudouridine(55) in tRNA. In terms of biological role, minor enzyme contributing to the isomerization of uridine to pseudouridine (pseudouridylation) of specific mitochondrial mRNAs (mt-mRNAs) such as COXI and COXIII mt-mRNAs, modulating the efficiency of mitochondrial protein synthesis without changes in transcript abundance or stability. Also catalyzes pseudouridylation of some tRNAs, including synthesis of pseudouridine(55) from uracil-55, in the psi GC loop of a subset of tRNAs. In Xenopus tropicalis (Western clawed frog), this protein is Pseudouridylate synthase TRUB2, mitochondrial.